We begin with the raw amino-acid sequence, 254 residues long: Probable phosphatase Sbal223_2880 (254 aa).

Residues His-8, His-10, His-16, His-41, Glu-74, His-102, His-132, Asp-193, and His-195 each contribute to the Zn(2+) site.

It belongs to the PHP family. Zn(2+) serves as cofactor.

The sequence is that of Probable phosphatase Sbal223_2880 from Shewanella baltica (strain OS223).